Consider the following 416-residue polypeptide: UV excision repair protein RAD23 homolog B (416 aa).

A Ubiquitin-like domain is found at 1–79 (MQVTLKTLQQ…VVVMVTKPKA (79 aa)). Positions 83–111 (AVPATTQPSSTPSPTAVSSSPAVAAAQAP) are enriched in low complexity. Residues 83–175 (AVPATTQPSS…STPGDSSRSN (93 aa)) form a disordered region. Residues 112 to 121 (APTPALPPTS) are compositionally biased toward pro residues. The segment covering 122 to 143 (TPASTAPASTTASSEPAPAGAT) has biased composition (low complexity). Phosphothreonine is present on Thr-155. 2 positions are modified to phosphoserine: Ser-160 and Ser-174. Phosphothreonine is present on Thr-186. A UBA 1 domain is found at 188-228 (QSYENMVTEIMSMGYEREQVIAALRASFNNPDRAVEYLLMG). Position 199 is a phosphoserine (Ser-199). Tyr-202 bears the Phosphotyrosine mark. The region spanning 274-317 (HPLEFLRNQPQFQQMRQIIQQNPSLLPALLQQIGRENPQLLQQI) is the STI1 domain. Residues 333 to 356 (QEAGSQGGGGGGGGGGGGGGGGGI) form a disordered region. Over residues 337 to 356 (SQGGGGGGGGGGGGGGGGGI) the composition is skewed to gly residues. One can recognise a UBA 2 domain in the interval 371–411 (PQEKEAIERLKALGFPEGLVIQAYFACEKNENLAANFLLQQ).

The protein belongs to the RAD23 family. As to quaternary structure, component of the XPC complex composed of XPC, RAD23B and CETN2. Interacts with NGLY1 and PSMC1. Interacts with ATXN3. Interacts with AMFR. Interacts with VCP; the interaction is indirect and mediated by NGLY1.

It is found in the nucleus. The protein localises to the cytoplasm. Its function is as follows. Multiubiquitin chain receptor involved in modulation of proteasomal degradation. Binds to polyubiquitin chains. Proposed to be capable to bind simultaneously to the 26S proteasome and to polyubiquitinated substrates and to deliver ubiquitinated proteins to the proteasome. May play a role in endoplasmic reticulum-associated degradation (ERAD) of misfolded glycoproteins by association with PNGase and delivering deglycosylated proteins to the proteasome. Involved in global genome nucleotide excision repair (GG-NER) by acting as component of the XPC complex. Cooperatively with Cetn2 appears to stabilize Xpc. May protect Xpc from proteasomal degradation. Functionally, the XPC complex is proposed to represent the first factor bound at the sites of DNA damage and together with other core recognition factors, Xpa, RPA and the TFIIH complex, is part of the pre-incision (or initial recognition) complex. The XPC complex recognizes a wide spectrum of damaged DNA characterized by distortions of the DNA helix such as single-stranded loops, mismatched bubbles or single-stranded overhangs. The orientation of XPC complex binding appears to be crucial for inducing a productive NER. XPC complex is proposed to recognize and to interact with unpaired bases on the undamaged DNA strand which is followed by recruitment of the TFIIH complex and subsequent scanning for lesions in the opposite strand in a 5'-to-3' direction by the NER machinery. Cyclobutane pyrimidine dimers (CPDs) which are formed upon UV-induced DNA damage esacpe detection by the XPC complex due to a low degree of structural perurbation. Instead they are detected by the UV-DDB complex which in turn recruits and cooperates with the XPC complex in the respective DNA repair. In vitro, the Xpc:Rad23b dimer is sufficient to initiate NER; it preferentially binds to cisplatin and UV-damaged double-stranded DNA and also binds to a variety of chemically and structurally diverse DNA adducts. Xpc:Rad23b contacts DNA both 5' and 3' of a cisplatin lesion with a preference for the 5' side. Xpc:Rad23bB induces a bend in DNA upon binding. Xpc:Rad23b stimulates the activity of DNA glycosylases Tdg and Smug1. The polypeptide is UV excision repair protein RAD23 homolog B (Rad23b) (Mus musculus (Mouse)).